Here is a 588-residue protein sequence, read N- to C-terminus: Autophagy-related protein 22-1 (588 aa).

A helical membrane pass occupies residues 35–55 (YGWAAEVFTVCAMGSFLPITL). N-linked (GlcNAc...) asparagine glycosylation occurs at N84. 3 consecutive transmembrane segments (helical) span residues 109-129 (TASF…ILII), 144-164 (LLVS…AVTP), and 168-188 (LLGG…FVLL). Residue N255 is glycosylated (N-linked (GlcNAc...) asparagine). 8 consecutive transmembrane segments (helical) span residues 270-290 (GIGI…LVIV), 301-321 (LVLF…AFWL), 365-385 (ILLF…VSGT), 399-419 (AALG…AFSW), 434-454 (IIAC…GFIP), 471-493 (FPLG…SFFG), 507-527 (LYAI…GFIT), and 536-556 (AFFF…LVDA).

It belongs to the ATG22 family.

The protein resides in the vacuole membrane. In terms of biological role, vacuolar effluxer which mediate the efflux of amino acids resulting from autophagic degradation. The release of autophagic amino acids allows the maintenance of protein synthesis and viability during nitrogen starvation. This Emericella nidulans (strain FGSC A4 / ATCC 38163 / CBS 112.46 / NRRL 194 / M139) (Aspergillus nidulans) protein is Autophagy-related protein 22-1 (atg22-1).